We begin with the raw amino-acid sequence, 156 residues long: Probable histone H2A.6 (156 aa).

Disordered stretches follow at residues 1–26 (MDVGVGGKAAKKAVGRKLGGPKKKPV) and 129–156 (KKTAEKADKPAKASKDKAAKSPKKQARS). Positions 9–26 (AAKKAVGRKLGGPKKKPV) are enriched in basic residues. Residues 130 to 147 (KTAEKADKPAKASKDKAA) show a composition bias toward basic and acidic residues. An SPKK motif motif is present at residues 149 to 152 (SPKK).

The protein belongs to the histone H2A family. The nucleosome is a histone octamer containing two molecules each of H2A, H2B, H3 and H4 assembled in one H3-H4 heterotetramer and two H2A-H2B heterodimers. The octamer wraps approximately 147 bp of DNA.

It localises to the nucleus. Its subcellular location is the chromosome. Functionally, core component of nucleosome. Nucleosomes wrap and compact DNA into chromatin, limiting DNA accessibility to the cellular machineries which require DNA as a template. Histones thereby play a central role in transcription regulation, DNA repair, DNA replication and chromosomal stability. DNA accessibility is regulated via a complex set of post-translational modifications of histones, also called histone code, and nucleosome remodeling. The protein is Probable histone H2A.6 of Oryza sativa subsp. indica (Rice).